Reading from the N-terminus, the 474-residue chain is MAPAALWVALVFELQLWATGHTVPAQVVLTPYKPEPGYECQISQEYYDRKAQMCCAKCPPGQYVKHFCNKTSDTVCADCEASMYTQVWNQFRTCLSCSSSCTTDQVEIRACTKQQNRVCACEAGRYCALKTHSGSCRQCMRLSKCGPGFGVASSRAPNGNVLCKACAPGTFSDTTSSTDVCRPHRICSILAIPGNASTDAVCAPESPTLSAIPRTLYVSQPEPTRSQPLDQEPGPSQTPSILTSLGSTPIIEQSTKGGISLPIGLIVGVTSLGLLMLGLVNCIILVQRKKKPSCLQRDAKVPHVPDEKSQDAVGLEQQHLLTTAPSSSSSSLESSASAGDRRAPPGGHPQARVMAEAQGFQEARASSRISDSSHGSHGTHVNVTCIVNVCSSSDHSSQCSSQASATVGDPDAKPSASPKDEQVPFSQEECPSQSPCETTETLQSHEKPLPLGVPDMGMKPSQAGWFDQIAVKVA.

The N-terminal stretch at Met-1–Thr-22 is a signal peptide. Over Val-23–Gly-258 the chain is Extracellular. Thr-30 is a glycosylation site (O-linked (GalNAc...) threonine). TNFR-Cys repeat units follow at residues Glu-39–Ala-77, Asp-78–Cys-119, Ala-120–Lys-164, and Ala-165–Ala-203. 10 disulfides stabilise this stretch: Cys-40–Cys-54, Cys-55–Cys-68, Cys-58–Cys-76, Cys-79–Cys-94, Cys-97–Cys-111, Cys-101–Cys-119, Cys-121–Cys-127, Cys-136–Cys-145, Cys-139–Cys-163, and Cys-166–Cys-181. An N-linked (GlcNAc...) asparagine glycan is attached at Asn-69. Residue Asn-195 is glycosylated (N-linked (GlcNAc...) asparagine). Residues Thr-208 and Thr-224 are each glycosylated (O-linked (GalNAc...) threonine). A disordered region spans residues Gln-220–Thr-243. Residues Ile-259–Arg-288 traverse the membrane as a helical segment. Topologically, residues Lys-289–Ala-474 are cytoplasmic. Disordered stretches follow at residues Leu-295–Gly-314, Leu-321–Gly-378, and Ser-397–Ala-463. The segment covering Arg-297–Gln-310 has biased composition (basic and acidic residues). Low complexity-rich tracts occupy residues Ala-324–Ala-338 and Ala-363–Gly-378. Ser-331 is subject to Phosphoserine. Over residues Glu-429 to Leu-442 the composition is skewed to polar residues.

Binds to TRAF2. Interacts with BMX. Interacts (activated form) with XPNPEP3.

It localises to the membrane. Receptor with high affinity for TNFSF2/TNF-alpha and approximately 5-fold lower affinity for homotrimeric TNFSF1/lymphotoxin-alpha. The TRAF1/TRAF2 complex recruits the apoptotic suppressors BIRC2 and BIRC3 to TNFRSF1B/TNFR2. This is Tumor necrosis factor receptor superfamily member 1B (Tnfrsf1b) from Mus musculus (Mouse).